The following is a 301-amino-acid chain: Probable alpha-L-glutamate ligase (301 aa).

One can recognise an ATP-grasp domain in the interval 104 to 287; the sequence is LQLLSRRGIG…VAGMIIEYLE (184 aa). Residues Lys-141, 178–179, Asp-187, and 211–213 each bind ATP; these read EY and RSN. Mg(2+) contacts are provided by Asp-248, Glu-260, and Asn-262. 3 residues coordinate Mn(2+): Asp-248, Glu-260, and Asn-262.

The protein belongs to the RimK family. Mg(2+) serves as cofactor. Mn(2+) is required as a cofactor.

This chain is Probable alpha-L-glutamate ligase, found in Pseudomonas savastanoi pv. phaseolicola (strain 1448A / Race 6) (Pseudomonas syringae pv. phaseolicola (strain 1448A / Race 6)).